Reading from the N-terminus, the 452-residue chain is MPPPTTPTPNPSIPQKATLTPLPPFQPDLYQRAWSSIPHPTLPLLATGHAKSVTVFSLATLSKHSALTGGHARSVRTVAWQPARGGGTGGGSGGKRLGLVTGSFDATAGLWSFEGDADAAAGGGGGGLEREVRMGGGGGGGGESEEEEEVREWEFNLVLEGHENEVKSLAFSPGGQYLATSSRDKSVWIWEDVSSGQGGDDEDEWETVAVLSEHDGDVKAVAWCPSNLPNARAGVGRQHNSSEVLASASYDDTVRVWREDADGEWVCVAVLEGHGGTVWGLQWEGKERQDGRFPRLMTFSAGRVRSRVWTLRVSGFGGVPSTMRRSLREEWDCTAVLPKVHTRDVYSVSWSADTGLVASTGSDGIIAVYAEESAPEDVAKSGVEGGAENGTSGPKSNWKVLGTITRAHGPYEVNHITWCKRFDPGAEHKGKEEMLVTTGDDGVVRPWQVRIS.

Residues Met-1–Ser-12 are compositionally biased toward pro residues. Residues Met-1–Pro-24 are disordered. WD repeat units lie at residues Gly-70–Ala-121, Gly-161–Asp-200, Glu-213–Cys-267, Gly-273–Val-319, Val-340–Ala-379, and Tyr-411–Ser-452.

This sequence belongs to the WD repeat CIA1 family.

In terms of biological role, essential component of the cytosolic iron-sulfur (Fe/S) protein assembly machinery. Required for the maturation of extramitochondrial Fe/S proteins. The protein is Probable cytosolic iron-sulfur protein assembly protein 1 of Chaetomium globosum (strain ATCC 6205 / CBS 148.51 / DSM 1962 / NBRC 6347 / NRRL 1970) (Soil fungus).